The sequence spans 274 residues: Undecaprenyl-diphosphatase (274 aa).

Transmembrane regions (helical) follow at residues 44 to 64, 85 to 105, 109 to 129, 185 to 205, 215 to 235, and 250 to 270; these read AKVF…LVYW, LNVL…GKAI, LFTP…ILWA, ATDY…VYSL, ADIP…WLCV, and FAWY…SGLV.

The protein belongs to the UppP family.

It is found in the cell inner membrane. It catalyses the reaction di-trans,octa-cis-undecaprenyl diphosphate + H2O = di-trans,octa-cis-undecaprenyl phosphate + phosphate + H(+). In terms of biological role, catalyzes the dephosphorylation of undecaprenyl diphosphate (UPP). Confers resistance to bacitracin. The chain is Undecaprenyl-diphosphatase from Acidovorax ebreus (strain TPSY) (Diaphorobacter sp. (strain TPSY)).